A 1217-amino-acid polypeptide reads, in one-letter code: Sterol 3-beta-glucosyltransferase (1217 aa).

The region spanning 195 to 232 (EFVRKYFGISEEETLIGHYTGWLLQEVLIQGNLFITNS) is the GRAM 1 domain. Residues 246–343 (AVVLCGKLKL…WVKCLKKQLF (98 aa)) form the PH domain. Positions 590–656 (AKIKDWFNLH…EDIEGYNEIL (67 aa)) constitute a GRAM 2 domain. The UDP-alpha-D-glucose site is built by Ser766, Arg767, Asp769, Asn1042, Ile1072, His1074, His1087, Ser1090, Gly1091, Thr1092, Asp1111, and Gln1112.

The protein belongs to the glycosyltransferase 28 family.

It localises to the cytoplasm. The protein localises to the membrane. The enzyme catalyses a sterol + UDP-alpha-D-glucose = a sterol 3-beta-D-glucoside + UDP + H(+). The catalysed reaction is ergosterol + UDP-alpha-D-glucose = ergosteryl 3-beta-D-glucoside + UDP + H(+). Sterol glycosyltransferase responsible for the glycosylation of ergosterol to form ergosterol-glucoside. This Vanderwaltozyma polyspora (strain ATCC 22028 / DSM 70294 / BCRC 21397 / CBS 2163 / NBRC 10782 / NRRL Y-8283 / UCD 57-17) (Kluyveromyces polysporus) protein is Sterol 3-beta-glucosyltransferase.